Consider the following 250-residue polypeptide: Deoxynucleoside kinase (250 aa).

27-35 (GNIGSGKTT) lines the ATP pocket. Substrate is bound by residues Glu-52, Tyr-70, and Gln-81. Glu-104 serves as the catalytic Proton acceptor. Substrate-binding residues include Arg-105 and Glu-172. Residues Ser-236, Ser-241, and Ser-243 each carry the phosphoserine modification.

It belongs to the DCK/DGK family. Monomer.

The catalysed reaction is a 2'-deoxyribonucleoside + ATP = a 2'-deoxyribonucleoside 5'-phosphate + ADP + H(+). Its activity is regulated as follows. Subject to feedback inhibition by dTTP. In terms of biological role, deoxyribonucleoside kinase that has a broad specificity phosphorylating thymidine, 2'-deoxyriboadenosine, 2'-deoxyribocytidine and 2'-deoxyriboguanosine. Specificity is higher for pyrimidine nucleosides. Several anti-viral and anti-cancer nucleoside analogs are also efficiently phosphorylated. The protein is Deoxynucleoside kinase (dnk) of Drosophila melanogaster (Fruit fly).